Consider the following 331-residue polypeptide: Adenosine deaminase (331 aa).

Zn(2+) is bound by residues H12 and H14. 2 residues coordinate substrate: H14 and D16. H197 is a binding site for Zn(2+). E200 acts as the Proton donor in catalysis. Zn(2+) is bound at residue D278.

Belongs to the metallo-dependent hydrolases superfamily. Adenosine and AMP deaminases family. Adenosine deaminase subfamily. Zn(2+) serves as cofactor.

The catalysed reaction is adenosine + H2O + H(+) = inosine + NH4(+). It carries out the reaction 2'-deoxyadenosine + H2O + H(+) = 2'-deoxyinosine + NH4(+). Catalyzes the hydrolytic deamination of adenosine and 2-deoxyadenosine. This chain is Adenosine deaminase, found in Shewanella pealeana (strain ATCC 700345 / ANG-SQ1).